The primary structure comprises 228 residues: Mitochondrial assembly of ribosomal large subunit protein 1 (228 aa).

The disordered stretch occupies residues Ser-53–Gly-77.

It belongs to the Iojap/RsfS family. Associates with the mitochondrial ribosome large subunit (39S) via interaction with MRPL12 and/or MRPL14. The interaction generates steric hindrance that is expected to prevent premature association of the 28S and 39S ribosomal subunits. Identified in a complex composed of MALSU1, MIEF1 upstream open reading frame protein and NDUFAB1; within the trimeric complex, MIEF1 upstream open reading frame protein functions as a bridging scaffold that interacts with MALSU1 on one side, and with NDUFAB1 on the other side. Interacts with MRPL12 and MRPL14.

It is found in the mitochondrion matrix. Required for normal mitochondrial ribosome function and mitochondrial translation. May play a role in ribosome biogenesis by preventing premature association of the 28S and 39S ribosomal subunits. Interacts with mitochondrial ribosomal protein uL14m (MRPL14), probably blocking formation of intersubunit bridge B8, preventing association of the 28S and 39S ribosomal subunits. Addition to isolated mitochondrial ribosomal subunits partially inhibits translation, probably by interfering with the association of the 28S and 39S ribosomal subunits and the formation of functional ribosomes. May also participate in the assembly and/or regulation of the stability of the large subunit of the mitochondrial ribosome. May function as a ribosomal silencing factor. The protein is Mitochondrial assembly of ribosomal large subunit protein 1 (Malsu1) of Mus musculus (Mouse).